We begin with the raw amino-acid sequence, 511 residues long: MTSLPNLLSRSDYLLALPMLVLSGFAVAILLLDLVLPKGWKRWNAALALAGLAAATMSLAKVWQAVYYIETPESKRFSGFLGSLVMDRFAIYFYLLFIVGAAVAILMSIRYMEIEHEDHGEYHALILFATIGMMCMASGMDLILLFVGLELMALSTYVLVGFLKRDKRSNEAALKYLLLGAFSSGIFAYGLSLFYGLTGSTNLTEIANKLAQRMADNPRDPIALLALITTATGLLFKIAAVPFHQWAPDAYEGAPTAVTGFMSVAVKAAGWAMLLRIFLFMLWPMREQYTPILIFVAVATMIGGNFAALTQTNVKRLLAYSSISHVGYMLLGLVASDGKNSSTGIKGILVYLAVYTFMNLGAFAVITSLRRRDIIGDELDDLAGLFFKAPSEAVLLLVFLLSLAGIPPLAGFWGKYYIFLSLMETGHYTLAVVAVLFAVLGMYYYLRIANAAFMREAVDAEPVKISPSLGAALWISALGTLGIGLFPEVFLRIVNWSLALSGDARVIGLLR.

14 helical membrane passes run 15-35 (LALP…LDLV), 46-66 (ALAL…WQAV), 89-109 (FAIY…LMSI), 120-140 (GEYH…ASGM), 142-162 (LILL…LVGF), 177-197 (LLLG…FYGL), 221-241 (PIAL…IAAV), 264-284 (VAVK…MLWP), 289-309 (YTPI…FAAL), 317-337 (LLAY…VASD), 347-367 (GILV…AVIT), 393-413 (AVLL…AGFW), 426-446 (GHYT…YYYL), and 471-491 (AALW…EVFL).

The protein belongs to the complex I subunit 2 family. As to quaternary structure, NDH-1 is composed of 14 different subunits. Subunits NuoA, H, J, K, L, M, N constitute the membrane sector of the complex.

The protein resides in the cell inner membrane. The enzyme catalyses a quinone + NADH + 5 H(+)(in) = a quinol + NAD(+) + 4 H(+)(out). Functionally, NDH-1 shuttles electrons from NADH, via FMN and iron-sulfur (Fe-S) centers, to quinones in the respiratory chain. The immediate electron acceptor for the enzyme in this species is believed to be ubiquinone. Couples the redox reaction to proton translocation (for every two electrons transferred, four hydrogen ions are translocated across the cytoplasmic membrane), and thus conserves the redox energy in a proton gradient. This Koribacter versatilis (strain Ellin345) protein is NADH-quinone oxidoreductase subunit N 1.